A 349-amino-acid polypeptide reads, in one-letter code: Twinfilin-2-B (349 aa).

ADF-H domains are found at residues Q4–S139 and G177–H313. Residues Q321–S349 form a disordered region.

This sequence belongs to the actin-binding proteins ADF family. Twinfilin subfamily. In terms of assembly, interacts with G-actin; ADP-actin form and capping protein (CP).

It is found in the cytoplasm. It localises to the cytoskeleton. The protein resides in the perinuclear region. Its function is as follows. Actin-binding protein involved in motile and morphological processes. Inhibits actin polymerization, likely by sequestering G-actin. The polypeptide is Twinfilin-2-B (twf2-b) (Xenopus laevis (African clawed frog)).